Here is an 854-residue protein sequence, read N- to C-terminus: Protein ROOT HAIR DEFECTIVE 3 homolog 1 (854 aa).

Topologically, residues 1 to 680 (MDEAAAAEAV…QAHKRGNGRL (680 aa)) are cytoplasmic. The region spanning 37-252 (GLSYAVVSIM…IAPGGLAGDR (216 aa)) is the GB1/RHD3-type G domain. A GTP-binding site is contributed by 47–54 (GPQSSGKS). A coiled-coil region spans residues 217-242 (ALPSFEEKEEQFREQVQQLRQRFSNS). The chain crosses the membrane as a helical span at residues 681-701 (PPPWAMVAIAVLGFNEIMTLL). The Lumenal portion of the chain corresponds to 702–704 (RNP). A helical membrane pass occupies residues 705–725 (IYLFLLFVGYLLVKALAVQLD). The Cytoplasmic segment spans residues 726–854 (INREFQNGVV…NESNNAYSIV (129 aa)). Low complexity-rich tracts occupy residues 758–781 (TEQQ…QQQP) and 814–828 (VSPS…VTSP). Residues 758–854 (TEQQQQQGHH…NESNNAYSIV (97 aa)) form a disordered region. Residues 842–854 (QPDNESNNAYSIV) show a composition bias toward polar residues.

Belongs to the TRAFAC class dynamin-like GTPase superfamily. GB1/RHD3 GTPase family. RHD3 subfamily.

Its subcellular location is the endoplasmic reticulum membrane. Probable GTP-binding protein that may be involved in cell development. The polypeptide is Protein ROOT HAIR DEFECTIVE 3 homolog 1 (Oryza sativa subsp. japonica (Rice)).